The chain runs to 327 residues: tRNA uridine(34) hydroxylase (327 aa).

A Rhodanese domain is found at 123–217; the sequence is SDPEVLVVDT…YLEEVPQEQS (95 aa). The active-site Cysteine persulfide intermediate is the cysteine 177.

The protein belongs to the TrhO family.

The catalysed reaction is uridine(34) in tRNA + AH2 + O2 = 5-hydroxyuridine(34) in tRNA + A + H2O. Functionally, catalyzes oxygen-dependent 5-hydroxyuridine (ho5U) modification at position 34 in tRNAs. The sequence is that of tRNA uridine(34) hydroxylase from Vibrio cholerae serotype O1 (strain ATCC 39315 / El Tor Inaba N16961).